Reading from the N-terminus, the 103-residue chain is Histone H4 (103 aa).

Residues M1–G14 are compositionally biased toward gly residues. A disordered region spans residues M1 to R20. S2 is subject to N-acetylserine. Position 17 is an N6-acetyllysine (K17). The DNA-binding element occupies K17 to R21. K80 is subject to N6-methylated lysine.

Belongs to the histone H4 family. The nucleosome is a histone octamer containing two molecules each of H2A, H2B, H3 and H4 assembled in one H3-H4 heterotetramer and two H2A-H2B heterodimers. The octamer wraps approximately 147 bp of DNA.

The protein localises to the nucleus. The protein resides in the chromosome. Core component of nucleosome. Nucleosomes wrap and compact DNA into chromatin, limiting DNA accessibility to the cellular machineries which require DNA as a template. Histones thereby play a central role in transcription regulation, DNA repair, DNA replication and chromosomal stability. DNA accessibility is regulated via a complex set of post-translational modifications of histones, also called histone code, and nucleosome remodeling. The protein is Histone H4 of Olisthodiscus luteus (Marine phytoflagellate).